Reading from the N-terminus, the 961-residue chain is Rho guanine nucleotide exchange factor 2 (961 aa).

The segment at 12-59 adopts a Phorbol-ester/DAG-type zinc-finger fold; it reads GHLFTTISVSGMTMCYACNKSITAKEALICPTCNVTIHNRCKDTLANC. Phosphoserine occurs at positions 82, 95, 102, 106, 110, 124, 136, 145, 147, and 150. Positions 104-134 are interaction with DYNLT1; it reads RQSLLGSRRGRSPLSLAKSVSTTNIAGHFND. A DH domain is found at 209–406; that stretch reads KQQDVIYELI…KELLSNVDQD (198 aa). Lysine 327 is subject to N6-acetyllysine. The PH domain occupies 446–545; the sequence is KLIHDGCLLW…WIRVIQQSVR (100 aa). Residues 561–588 adopt a coiled-coil conformation; the sequence is EAYLRRIKMELQQKDRALVELLQEKVGL. Serine 619 and serine 622 each carry phosphoserine. The residue at position 653 (threonine 653) is a Phosphothreonine; by MAPK1 or MAPK3. A disordered region spans residues 659-679; the sequence is LPVETDSGGNTSPGVTANGEA. Residues serine 665, serine 670, serine 685, and serine 756 each carry the phosphoserine modification. Residues 742 to 761 are compositionally biased toward basic and acidic residues; sequence PEGPERREKLTRANSRDGEA. A disordered region spans residues 742 to 770; it reads PEGPERREKLTRANSRDGEAGRAGAAPVA. Residues 772–841 are a coiled coil; sequence EKQATELALL…RQLAALGHTE (70 aa). Serine 860 is modified (phosphoserine; by PAK1 and AURKA). A disordered region spans residues 867 to 961; sequence LYLSFTPPQP…RDGEPVASES (95 aa). Tyrosine 868 carries the post-translational modification Phosphotyrosine. At serine 870 the chain carries Phosphoserine; by PAK4. Over residues 894–913 the composition is skewed to basic and acidic residues; sequence RPFEDRERQELGSPDERLQD. Phosphoserine occurs at positions 906, 914, and 915. Acidic residues predominate over residues 915–925; that stretch reads SDPDTGSEEEG. At threonine 919 the chain carries Phosphothreonine. A phosphoserine mark is found at serine 921, serine 927, serine 928, and serine 931. The residue at position 935 (serine 935) is a Phosphoserine; by CDK1.

In terms of assembly, found in a complex composed at least of ARHGEF2, NOD2 and RIPK2. Interacts with RIPK2; the interaction mediates tyrosine phosphorylation of RIPK2 by Src kinase CSK. Interacts with RIPK1 and RIPK3. Interacts with YWHAZ/14-3-3 zeta; when phosphorylated at Ser-860. Interacts with the kinases PAK4, AURKA and MAPK1. Interacts with RHOA and RAC1. Interacts with NOD1. Interacts (via the N- terminal zinc finger) with CAPN6 (via domain II). Interacts with DYNLT1. Phosphorylation of Ser-860 by PAK1 induces binding to protein YWHAZ, promoting its relocation to microtubules and the inhibition of its activity. Phosphorylated by AURKA and CDK1 during mitosis, which negatively regulates its activity. Phosphorylation by MAPK1 or MAPK3 increases nucleotide exchange activity. Phosphorylation by PAK4 releases GEF-H1 from the microtubules. Phosphorylated on serine, threonine and tyrosine residues in a RIPK2-dependent manner.

The protein resides in the cytoplasm. It is found in the cytoskeleton. Its subcellular location is the cell junction. It localises to the tight junction. The protein localises to the golgi apparatus. The protein resides in the spindle. It is found in the cytoplasmic vesicle. Activates Rho-GTPases by promoting the exchange of GDP for GTP. May be involved in epithelial barrier permeability, cell motility and polarization, dendritic spine morphology, antigen presentation, leukemic cell differentiation, cell cycle regulation, innate immune response, and cancer. Binds Rac-GTPases, but does not seem to promote nucleotide exchange activity toward Rac-GTPases. May stimulate instead the cortical activity of Rac. Inactive toward CDC42, TC10, or Ras-GTPases. Forms an intracellular sensing system along with NOD1 for the detection of microbial effectors during cell invasion by pathogens. Involved in innate immune signaling transduction pathway promoting cytokine IL6/interleukin-6 and TNF-alpha secretion in macrophage upon stimulation by bacterial peptidoglycans; acts as a signaling intermediate between NOD2 receptor and RIPK2 kinase. Contributes to the tyrosine phosphorylation of RIPK2 through Src tyrosine kinase leading to NF-kappaB activation by NOD2. Overexpression activates Rho-, but not Rac-GTPases, and increases paracellular permeability. Involved in neuronal progenitor cell division and differentiation. Involved in the migration of precerebellar neurons. The polypeptide is Rho guanine nucleotide exchange factor 2 (ARHGEF2) (Sus scrofa (Pig)).